Reading from the N-terminus, the 239-residue chain is MLKQTLLYTGKAKSVYETDNADHLILVFRDDASAFNGEKIEQLDRKGKVNNRFNAFIMEKLAEAGIETHFEKLLSPTEVLVKKLQMIPVECVIRNYAAGSLCRRLGVEEGKELTPPTFELFYKDDGLGDPMVNESQAIALGWATAEQLEQMKVLTYKVNDVLKALFAEGNMILVDFKLEFGVFHDRIVLGDEFSPDGCRLWDKDTKKKLDKDRFRQGLGGVVEAYEEVAARLGVDLSDI.

The protein belongs to the SAICAR synthetase family.

It carries out the reaction 5-amino-1-(5-phospho-D-ribosyl)imidazole-4-carboxylate + L-aspartate + ATP = (2S)-2-[5-amino-1-(5-phospho-beta-D-ribosyl)imidazole-4-carboxamido]succinate + ADP + phosphate + 2 H(+). The protein operates within purine metabolism; IMP biosynthesis via de novo pathway; 5-amino-1-(5-phospho-D-ribosyl)imidazole-4-carboxamide from 5-amino-1-(5-phospho-D-ribosyl)imidazole-4-carboxylate: step 1/2. This is Phosphoribosylaminoimidazole-succinocarboxamide synthase from Acinetobacter baumannii (strain AB307-0294).